The sequence spans 338 residues: Methionine import ATP-binding protein MetN 1 (338 aa).

Positions 2 to 241 (IELHQVSKSF…AKHATTKRFV (240 aa)) constitute an ABC transporter domain. Position 38-45 (38-45 (GYSGAGKS)) interacts with ATP.

It belongs to the ABC transporter superfamily. Methionine importer (TC 3.A.1.24) family. As to quaternary structure, the complex is composed of two ATP-binding proteins (MetN), two transmembrane proteins (MetI) and a solute-binding protein (MetQ).

It localises to the cell membrane. The catalysed reaction is L-methionine(out) + ATP + H2O = L-methionine(in) + ADP + phosphate + H(+). It catalyses the reaction D-methionine(out) + ATP + H2O = D-methionine(in) + ADP + phosphate + H(+). Its function is as follows. Part of the ABC transporter complex MetNIQ involved in methionine import. Responsible for energy coupling to the transport system. This is Methionine import ATP-binding protein MetN 1 from Listeria monocytogenes serotype 4b (strain F2365).